Consider the following 646-residue polypeptide: Choline transporter-like protein 1 (646 aa).

The Cytoplasmic segment spans residues 1-27; it reads MGCCGCGSEEGSVRQWKPLEQRSCTDV. Residues 28–48 traverse the membrane as a helical segment; it reads LWLLIFVLFCIGMAIICGFAI. The Extracellular portion of the chain corresponds to 49 to 207; sequence ASGAAQRLVF…RVITGVMTSK (159 aa). N-linked (GlcNAc...) asparagine glycosylation is present at Asn-133. Residues 208-228 form a helical membrane-spanning segment; sequence EIIVGLCLMSLVLSILLMVII. The Cytoplasmic portion of the chain corresponds to 229–233; sequence RYISK. A helical membrane pass occupies residues 234–254; sequence VLVWILAILTIIGSIGGTAVL. Over 255–281 the chain is Extracellular; it reads WWLYADHKKTLKLDPSQGDVAADNVTA. N-linked (GlcNAc...) asparagine glycosylation occurs at Asn-278. A helical membrane pass occupies residues 282-302; that stretch reads LLVCAIIATVITVILLLLMLI. Topologically, residues 303-308 are cytoplasmic; sequence MRKRVA. Residues 309-329 form a helical membrane-spanning segment; sequence LTIALFHVAGKVFIHIPFLIF. At 330-331 the chain is on the extracellular side; that stretch reads QS. A helical transmembrane segment spans residues 332–352; sequence LWTFLALAFFWIYWIAVLLLL. Over 353-373 the chain is Cytoplasmic; sequence ATAGYPQKKDQGYVEFKVSGP. Residues 374 to 394 traverse the membrane as a helical segment; it reads LQYTWIYHLVGLIWISEFILA. Over 395-435 the chain is Extracellular; the sequence is CQQMTIAGAVVTYYFTRDKHNLPATPILASMCRLIKYHLGT. A helical transmembrane segment spans residues 436–456; the sequence is VAKGSFIITLIKIPQMILVYI. At 457 to 530 the chain is on the cytoplasmic side; the sequence is HSQLKGKENA…RVAAINTVGD (74 aa). The helical transmembrane segment at 531–551 threads the bilayer; that stretch reads FVLFLGKLLIVLVTGFVGIIL. At 552 to 559 the chain is on the extracellular side; sequence LNYQRDYT. The helical transmembrane segment at 560 to 580 threads the bilayer; sequence VWVLPLIIICLFAFFVSHCFL. Residues 581–646 are Cytoplasmic-facing; the sequence is SIYEMVVDVL…KSMASGSDNA (66 aa).

Belongs to the CTL (choline transporter-like) family. Present in myelinated structures from brain and spinal cord (at protein level).

Its subcellular location is the cell membrane. The protein localises to the mitochondrion outer membrane. It catalyses the reaction choline(out) + n H(+)(in) = choline(in) + n H(+)(out). The enzyme catalyses ethanolamine(out) + n H(+)(in) = ethanolamine(in) + n H(+)(out). Functionally, probable choline transporter. May be involved in membrane synthesis and myelin production. This Torpedo marmorata (Marbled electric ray) protein is Choline transporter-like protein 1 (slc44a1).